Consider the following 917-residue polypeptide: Major intrinsically disordered Notch2-binding receptor 1 (917 aa).

The Cytoplasmic segment spans residues 1–892; it reads MEANQEASLF…AEFRRAKVCK (892 aa). Disordered stretches follow at residues 337 to 367, 388 to 410, 461 to 483, 568 to 588, 652 to 687, 706 to 727, and 746 to 783; these read STYF…WPAK, PSEE…GPDR, SCTS…QHVL, ITNG…NVHH, SEAP…CSDA, TRPS…IASI, and NEEE…LPKQ. Positions 461 to 480 are enriched in polar residues; the sequence is SCTSGQHSSDTSSVGTQTEQ. Positions 576 to 588 are enriched in basic and acidic residues; sequence KGDKCNRPENVHH. Position 712 is a phosphoserine (S712). A helical membrane pass occupies residues 893 to 913; the sequence is IAALITAAACTVILVIVVPIC. Over 914-917 the chain is Extracellular; sequence TMKS.

The protein belongs to the MINAR family. As to quaternary structure, interacts with NOTCH2; this interaction increases MINAR1 stability. Interacts (via N-terminus) with DEPTOR (via PDZ domain); this interaction may stabilize DEPTOR protein by impairing its ubiquitination. In terms of tissue distribution, expressed in brain and in islets of Langerhans.

It localises to the cell membrane. Its function is as follows. Intrinsically disordered protein which may negatively regulate mTOR signaling pathway by stabilizing the mTOR complex component DEPTOR. Negatively regulates angiogenesis. Negatively regulates cell growth. Negatively regulates neurite outgrowth in hippocampal neurons. The polypeptide is Major intrinsically disordered Notch2-binding receptor 1 (Minar1) (Mus musculus (Mouse)).